A 632-amino-acid chain; its full sequence is Deoxynucleoside triphosphate triphosphohydrolase SAMHD1 (632 aa).

Residues 1-22 are disordered; the sequence is MKGINGAKRVRHDASPSAQDGY. An SAM domain is found at 44–107; the sequence is WDVEEVCLFL…LSCLRMLCQN (64 aa). GTP contacts are provided by Lys-113 and Val-114. Asn-116 contacts dGTP. GTP contacts are provided by Asp-134, Gln-139, and Arg-142. Residues Gln-146, Leu-147, Val-153, and Arg-161 each coordinate dGTP. Position 146 (Gln-146) interacts with dATP. DCTP is bound at residue Gln-146. Gln-146 is a binding site for dTTP. Arg-161 is a binding site for dATP. Arg-161 is a dCTP binding site. DTTP is bound at residue Arg-161. Residues 161–321 enclose the HD domain; sequence RFEHSIGVGY…GIDVDKWDYF (161 aa). Mn(2+)-binding residues include His-164, His-203, and Asp-204. DATP-binding residues include His-207 and His-212. Residues His-207 and His-212 each contribute to the dCTP site. The dTTP site is built by His-207 and His-212. Residue His-230 is part of the active site. Asp-316 serves as a coordination point for Mn(2+). 12 residues coordinate dGTP: Lys-317, Tyr-320, Asp-324, Arg-338, Arg-357, Lys-359, Asn-363, Arg-371, Tyr-379, Gln-380, His-381, and Lys-382. Lys-317, Tyr-320, and Asp-324 together coordinate dATP. The dCTP site is built by Lys-317, Tyr-320, and Asp-324. Positions 317, 320, and 324 each coordinate dTTP. Arg-371 serves as a coordination point for dATP. Residue Arg-371 coordinates dCTP. Gln-380 is a binding site for dATP. Position 380 (Gln-380) interacts with dCTP. Gln-380 serves as a coordination point for dTTP. 3 residues coordinate GTP: Arg-456, Lys-460, and Lys-529. Position 529 (Lys-529) interacts with dGTP.

It belongs to the SAMHD1 family. Homodimer; in absence of GTP and dNTP. Homotetramer; in GTP- and dNTP-bound form. Interacts with rbbp8/CtIP. It depends on Zn(2+) as a cofactor.

Its subcellular location is the nucleus. The protein localises to the chromosome. The enzyme catalyses a 2'-deoxyribonucleoside 5'-triphosphate + H2O = a 2'-deoxyribonucleoside + triphosphate + H(+). It catalyses the reaction dATP + H2O = 2'-deoxyadenosine + triphosphate + H(+). The catalysed reaction is dCTP + H2O = 2'-deoxycytidine + triphosphate + H(+). It carries out the reaction dGTP + H2O = 2'-deoxyguanosine + triphosphate + H(+). The enzyme catalyses dTTP + H2O = thymidine + triphosphate + H(+). Allosterically activated and regulated via the combined actions of GTP and dNTPs (dATP, dGTP, dTTP and dCTP): Allosteric site 1 binds GTP, while allosteric site 2 binds dNTP. Allosteric activation promotes the formation of highly active homotetramers. In terms of biological role, protein that acts both as a host restriction factor involved in defense response to virus and as a regulator of DNA end resection at stalled replication forks. Has deoxynucleoside triphosphate (dNTPase) activity, which is required to restrict infection by viruses: dNTPase activity reduces cellular dNTP levels to levels too low for retroviral reverse transcription to occur, blocking early-stage virus replication in dendritic and other myeloid cells. Functions during S phase at stalled DNA replication forks to promote the resection of gapped or reversed forks: acts by stimulating the exonuclease activity of mre11, activating the ATR-CHK1 pathway and allowing the forks to restart replication. Ability to promote DNA end resection at stalled replication forks is independent of dNTPase activity. The chain is Deoxynucleoside triphosphate triphosphohydrolase SAMHD1 from Xenopus laevis (African clawed frog).